Consider the following 236-residue polypeptide: 2-C-methyl-D-erythritol 4-phosphate cytidylyltransferase (236 aa).

Belongs to the IspD/TarI cytidylyltransferase family. IspD subfamily.

It carries out the reaction 2-C-methyl-D-erythritol 4-phosphate + CTP + H(+) = 4-CDP-2-C-methyl-D-erythritol + diphosphate. It functions in the pathway isoprenoid biosynthesis; isopentenyl diphosphate biosynthesis via DXP pathway; isopentenyl diphosphate from 1-deoxy-D-xylulose 5-phosphate: step 2/6. Its function is as follows. Catalyzes the formation of 4-diphosphocytidyl-2-C-methyl-D-erythritol from CTP and 2-C-methyl-D-erythritol 4-phosphate (MEP). This chain is 2-C-methyl-D-erythritol 4-phosphate cytidylyltransferase, found in Paraburkholderia phymatum (strain DSM 17167 / CIP 108236 / LMG 21445 / STM815) (Burkholderia phymatum).